We begin with the raw amino-acid sequence, 85 residues long: Small ribosomal subunit protein bS16 (85 aa).

This sequence belongs to the bacterial ribosomal protein bS16 family.

This is Small ribosomal subunit protein bS16 from Clostridium kluyveri (strain NBRC 12016).